A 331-amino-acid polypeptide reads, in one-letter code: Homoserine kinase (331 aa).

The protein belongs to the pseudomonas-type ThrB family.

It catalyses the reaction L-homoserine + ATP = O-phospho-L-homoserine + ADP + H(+). It participates in amino-acid biosynthesis; L-threonine biosynthesis; L-threonine from L-aspartate: step 4/5. This is Homoserine kinase from Cupriavidus necator (strain ATCC 17699 / DSM 428 / KCTC 22496 / NCIMB 10442 / H16 / Stanier 337) (Ralstonia eutropha).